A 436-amino-acid polypeptide reads, in one-letter code: MSVTVEILENLERKVVLSLPWSEINAETDKKLKQTQRRAKIDGFRPGKAPLKMIAQMYGASAQNDVINELVQRRFYDVAVAQELKVAGYPRFEGVEEQDDKESFKVAAIFEVFPEVVIGDLSAQEVEKVTASVGDAEVDQTVEILRKQRTRFNHVDREARNGDRVIIDFEGKIDGEPFAGGTSKNYAFVLGAGQMLPEFEAGVVGMKAGESKDVTVNFPEEYHGKDVAGKTAVFTITLNNVSEPTLPEVDADFAKALGIADGDVAKMREEVKKNVSREVERRVNEQTKESVMNALIKAVELKVPVALVNEEAARLANEMKQNFVNQGMTDAANLDLPLDMFKEQAERRVSLGLILAKLVDENKLEPTEGQIKAVVANFAESYEDPQEVIDWYYADTSRLQAPTSLAVESNVVDFVLGKAKVNKKALSFDEVMGAQA.

The PPIase FKBP-type domain maps to 162–247 (GDRVIIDFEG…LNNVSEPTLP (86 aa)).

The protein belongs to the FKBP-type PPIase family. Tig subfamily.

It is found in the cytoplasm. The catalysed reaction is [protein]-peptidylproline (omega=180) = [protein]-peptidylproline (omega=0). Its function is as follows. Involved in protein export. Acts as a chaperone by maintaining the newly synthesized protein in an open conformation. Functions as a peptidyl-prolyl cis-trans isomerase. The sequence is that of Trigger factor from Neisseria gonorrhoeae (strain ATCC 700825 / FA 1090).